Consider the following 209-residue polypeptide: MPIKVLFVDDHEMVRIGISSYLSTQSDIDVVGEGKSGKDAIEKAHELKPDLILMDLLMDDMDGVEATEQVKKDLPNIKVVMLTSYIEDNEVYRALDSGVDSYILKTTSASDIAEAIRKTYNNESVFEAEVLVKMRNRMKQRAELYEMLTEREMEILLLIAKGYSNQEIASASHITIKTVKTHVSNILSKLEVQDRTQAVIYAFQHNLIQ.

In terms of domain architecture, Response regulatory spans 4-120 (KVLFVDDHEM…DIAEAIRKTY (117 aa)). D55 bears the 4-aspartylphosphate mark. In terms of domain architecture, HTH luxR-type spans 141 to 206 (RAELYEMLTE…QAVIYAFQHN (66 aa)). The segment at residues 165-184 (NQEIASASHITIKTVKTHVS) is a DNA-binding region (H-T-H motif).

In terms of processing, phosphorylated by VraS.

Its subcellular location is the cytoplasm. In terms of biological role, member of the two-component regulatory system VraS/VraR involved in the control of the cell wall peptidoglycan biosynthesis. The chain is Response regulator protein VraR (vraR) from Staphylococcus saprophyticus subsp. saprophyticus (strain ATCC 15305 / DSM 20229 / NCIMB 8711 / NCTC 7292 / S-41).